We begin with the raw amino-acid sequence, 792 residues long: Phosphatidylinositol 4-phosphate 5-kinase type-1 sktl (792 aa).

A compositionally biased stretch (basic and acidic residues) spans 1-21; it reads MDTRVELELEPVGKQDRLKDQ. 5 disordered regions span residues 1-74, 105-139, 423-446, 577-612, and 640-714; these read MDTR…QPGT, TQTP…KKLG, AKLQ…DAPE, TPTF…PTNA, and AAST…TDLS. 2 stretches are compositionally biased toward polar residues: residues 52-62 and 105-131; these read QTASPDQEATP and TQTP…STTG. Positions 155–573 constitute a PIPK domain; sequence QSKQIMGSIQ…RFQDAMGKQV (419 aa). Low complexity predominate over residues 642–658; the sequence is STSSLQQQRSSNQSNNN. Residues 678–702 are compositionally biased toward polar residues; the sequence is EPSSTYHTQYSYDSSGRTGSALTSD.

Interacts with ash2 (via B30.2/SPRY domain); the interaction is direct and seems to be specific for ash2 isoform B.

It is found in the cytoplasm. Its subcellular location is the cell cortex. It localises to the nucleus. The protein resides in the chromosome. The protein localises to the apical cell membrane. It is found in the cell projection. Its subcellular location is the cilium. It localises to the flagellum membrane. It catalyses the reaction a 1,2-diacyl-sn-glycero-3-phospho-(1D-myo-inositol 4-phosphate) + ATP = a 1,2-diacyl-sn-glycero-3-phospho-(1D-myo-inositol-4,5-bisphosphate) + ADP + H(+). In terms of biological role, catalyzes the phosphorylation of phosphatidylinositol 4-phosphate (PtdIns[4]P) to form phosphatidylinositol 4,5-bisphosphate (PtdIns[4,5]P(2)), a lipid second messenger that regulates several cellular processes such as signal transduction, vesicle trafficking, actin cytoskeleton dynamics, cell adhesion, and cell motility. PtdIns[4,5]P(2) can directly act as a second messenger or can be utilized as a precursor to generate other second messengers: inositol 1,4,5-trisphosphate (IP3), diacylglycerol (DAG) or phosphatidylinositol-3,4,5-trisphosphate (PtdIns[3,4,5]P(3)). Required for germline development during oogenesis. Sktl is the major phosphatidylinositol 4-phosphate 5-kinase responsible for enrichment of PtdIns[4,5]P(2) in the apical plasma membrane of the oocyte and follicular epithelium cells of the egg chamber during oogenesis. Involved in nuclear anchoring and microtubule organization required for targeted mRNA transport during maintenance of oocyte polarity. The PtdIns[4,5]P(2) produced by sktl is required for maintenance of cellular polarity, prevention of the epithelial-mesenchymal transition process, maintenance of adherens junctions and regulation of apical constriction, probably by affecting polarized cortical recruitment of PAR proteins and their effectors, including baz/bazooka, aPKC, par-1 and l(2)gl. Involved in actin cytoskeleton organization probably through PtdIns[4,5]P(2)-mediated regulation of Moe/Moesin phosphorylation. Involved in PtdIns[4,5]P(2)-mediated apical recruitment of the formin dia/diaphanous in tubular epithelial cells. Involved in anterodorsal cell morphogenesis and eggshell dorsal appendage formation, probably through regulation of apical constriction by PtdIns[4,5]P(2) during tubulogenesis. Required for cell viability or proliferation during wing and eye imaginal disk development. May be involved in cytoskeletal regulation during sensory bristle development. Together with mys/integrin beta localizes to the trailing edge of larval epidermal cells in a JNK signaling-dependent manner during wound healing and is required for setting up cell polarity and re-epithelialization. Required for polarization of elongating spermatid cysts possibly by generation of PtdIns[4,5]P(2) involved in mediating membrane association and orientation of the nucleus-basal body pair. Probably involved in PtdIns[4,5]P(2)-mediated recruitment of exocyst proteins that may mediate membrane addition during spermatid elongation. Involved in maintenance of specialised cell contacts known as slit diaphragms required for nephrocyte morphogenesis and function. Regulates nephrocyte endocytosis, possibly through PtdIns[4,5]P(2)-mediated recruitment of effector proteins. Not required for nervous system development or neurotransmitter release at the neuromuscular junction. Together with ash2 probably plays a role in maintenance of transcriptionally active chromatin through down-regulation of histone H1 hyperphosphorylation. The polypeptide is Phosphatidylinositol 4-phosphate 5-kinase type-1 sktl (Drosophila melanogaster (Fruit fly)).